We begin with the raw amino-acid sequence, 300 residues long: GTP-binding protein At2g22870 (300 aa).

Positions 119-297 (DRPEIAILGR…LLHMSQLRNY (179 aa)) constitute an EngB-type G domain. Residues 127–134 (GRSNVGKS), 154–158 (GKTQL), 172–175 (DLPG), 239–242 (TKCD), and 276–278 (TSS) contribute to the GTP site. The Mg(2+) site is built by S134 and T156.

Belongs to the TRAFAC class TrmE-Era-EngA-EngB-Septin-like GTPase superfamily. EngB GTPase family. Requires Mg(2+) as cofactor.

The sequence is that of GTP-binding protein At2g22870 (EMB2001) from Arabidopsis thaliana (Mouse-ear cress).